The primary structure comprises 1555 residues: Pre-mRNA cleavage complex 2 protein Pcf11 (1555 aa).

Ser-2 carries the N-acetylserine modification. Positions Ala-14–Asp-142 constitute a CID domain. Phosphoserine; by WNK1 is present on Ser-120. At Thr-121 the chain carries Phosphothreonine; by WNK1. The disordered stretch occupies residues Asn-167–Ser-186. Residues Ser-169 and Ser-182 each carry the phosphoserine modification. Positions Ser-174–Ser-186 are enriched in low complexity. A coiled-coil region spans residues Gln-202–Ser-239. A disordered region spans residues Val-266–Ala-648. Lys-291 is covalently cross-linked (Glycyl lysine isopeptide (Lys-Gly) (interchain with G-Cter in SUMO2)). The span at His-307–Phe-317 shows a compositional bias: basic and acidic residues. The segment covering Asn-320–Ile-333 has biased composition (polar residues). Lys-328 participates in a covalent cross-link: Glycyl lysine isopeptide (Lys-Gly) (interchain with G-Cter in SUMO2). Composition is skewed to basic and acidic residues over residues Lys-342–Ser-364, His-380–Glu-421, and Glu-427–Leu-442. Residue Lys-456 forms a Glycyl lysine isopeptide (Lys-Gly) (interchain with G-Cter in SUMO2) linkage. The residue at position 459 (Thr-459) is a Phosphothreonine. Residues Ser-475–Lys-486 show a composition bias toward basic residues. Phosphoserine is present on residues Ser-489, Ser-494, Ser-509, and Ser-511. Over residues Ser-494–Arg-508 the composition is skewed to basic residues. A compositionally biased stretch (basic and acidic residues) spans Ser-529 to Gln-567. A compositionally biased stretch (polar residues) spans Glu-568–Gly-578. Positions Ser-599–Lys-615 are enriched in basic and acidic residues. The residue at position 645 (Ser-645) is a Phosphoserine. Lys-654 participates in a covalent cross-link: Glycyl lysine isopeptide (Lys-Gly) (interchain with G-Cter in SUMO2). Ser-705 bears the Phosphoserine mark. 2 disordered regions span residues Phe-707–Arg-732 and Arg-749–Asp-781. Over residues Pro-716–Phe-725 the composition is skewed to basic and acidic residues. Residue Lys-723 forms a Glycyl lysine isopeptide (Lys-Gly) (interchain with G-Cter in SUMO2) linkage. Ser-728 and Ser-777 each carry phosphoserine. At Thr-785 the chain carries Phosphothreonine. Residue Ser-794 is modified to Phosphoserine. Residues Arg-805, Arg-820, and Arg-833 each carry the asymmetric dimethylarginine modification. Ser-851 carries the phosphoserine modification. Asymmetric dimethylarginine is present on residues Arg-929, Arg-942, Arg-955, Arg-981, Arg-994, and Arg-1007. A disordered region spans residues His-1056–Gln-1081. Asymmetric dimethylarginine occurs at positions 1093 and 1104. 2 disordered regions span residues Val-1127 to Ser-1147 and Phe-1159 to Gly-1187. Residue Ser-1161 is modified to Phosphoserine. The span at Pro-1162–Asn-1175 shows a compositional bias: low complexity. Residue Lys-1278 forms a Glycyl lysine isopeptide (Lys-Gly) (interchain with G-Cter in SUMO2) linkage. Residues Ser-1289 to Thr-1298 show a composition bias toward polar residues. The segment at Ser-1289–Val-1315 is disordered. Over residues Pro-1303–Val-1315 the composition is skewed to acidic residues. Glycyl lysine isopeptide (Lys-Gly) (interchain with G-Cter in SUMO2) cross-links involve residues Lys-1419, Lys-1511, and Lys-1524. Residues Glu-1516–Val-1555 are disordered. A compositionally biased stretch (basic and acidic residues) spans Asp-1519 to Asp-1529. Position 1530 is a phosphothreonine (Thr-1530). Lys-1546 is covalently cross-linked (Glycyl lysine isopeptide (Lys-Gly) (interchain with G-Cter in SUMO2)).

As to quaternary structure, associates with the phosphorylated CTD domain of POLR2A /RNA polymerase II. Post-translationally, phosphorylation at Ser-120 and/or Thr-121 by WNK1 weakens its association with POLR2A/RNA polymerase II, promoting transcript release from the chromatin template and mRNA export to the cytoplasm.

The protein resides in the nucleus. In terms of biological role, component of pre-mRNA cleavage complex II, which promotes transcription termination by RNA polymerase II. This is Pre-mRNA cleavage complex 2 protein Pcf11 from Homo sapiens (Human).